Consider the following 593-residue polypeptide: MGSRGLPPLLLVLLNCYTSSSTQVIAIPAAATPAVTKEDLNSTKATPTTLQPSLSPRTPGTPRAPERSGPRPTPVTDVAALCVCDLLPAQCDVNCCCDPDCSPADFSIFSACSVPVVTGDRQFCSQKAAFYSMNLTADPPHRDFKLIDQINPSVFCIHISNYKPALSFANPEVPDENNFDRLMQTSGGFTLSAESAVPSTAASDGPQPTKYEYGAPLQTAGASSGSFLKLPSPLTSSLCADQNPAAFLVSQAFECSRRVDIEQCEGMEALSMAHYSSPAILRVPNSMTQVSIKIQSVMYRSLNHTLTQLEGHGVLRPSLVSTGQDRLCSNVVLQVKYSLLYTATGQIHEAGLSLVLGTLSSAVSLLQQKFEIHFIQHGTKPVPLSGNPGYRVGLPLAAGFQPQKGSGIIQTTNRQGQFTILRSTSQQDCLASEGLRTPVLFGYNVQSGCQLRLTGTIPCGLLAQKVQDLLRGQAFPDYVAAFGNSRAQDVQDWVPVHFVTYSSNMKGSCQLPVALAIEVKWTKYGSLLNPQARIVNVTAQLVSVPEPLPGPERTVVISTAVTFVDVSAPAEAGFRAPPTINARLPFSFFFPFV.

Residues 1 to 22 (MGSRGLPPLLLVLLNCYTSSST) form the signal peptide. The interval 37–72 (KEDLNSTKATPTTLQPSLSPRTPGTPRAPERSGPRP) is disordered. N-linked (GlcNAc...) asparagine glycosylation occurs at N41. Positions 42 to 58 (STKATPTTLQPSLSPRT) are enriched in polar residues. N-linked (GlcNAc...) asparagine glycosylation occurs at N303. At R486 the chain carries Omega-N-methylarginine. The N-linked (GlcNAc...) asparagine glycan is linked to N536.

The protein belongs to the tectonic family. In terms of assembly, part of the tectonic-like complex (also named B9 complex).

It localises to the cytoplasm. The protein localises to the cytoskeleton. It is found in the cilium basal body. The protein resides in the secreted. Functionally, component of the tectonic-like complex, a complex localized at the transition zone of primary cilia and acting as a barrier that prevents diffusion of transmembrane proteins between the cilia and plasma membranes. Regulator of Hedgehog (Hh), required for both activation and inhibition of the Hh pathway in the patterning of the neural tube. During neural tube development, it is required for formation of the most ventral cell types and for full Hh pathway activation. Functions in Hh signal transduction to fully activate the pathway in the presence of high Hh levels and to repress the pathway in the absence of Hh signals. Modulates Hh signal transduction downstream of SMO and RAB23. This Mus musculus (Mouse) protein is Tectonic-1 (Tctn1).